The primary structure comprises 206 residues: Protein GrpE (206 aa).

It belongs to the GrpE family. In terms of assembly, homodimer.

Its subcellular location is the cytoplasm. Functionally, participates actively in the response to hyperosmotic and heat shock by preventing the aggregation of stress-denatured proteins, in association with DnaK and GrpE. It is the nucleotide exchange factor for DnaK and may function as a thermosensor. Unfolded proteins bind initially to DnaJ; upon interaction with the DnaJ-bound protein, DnaK hydrolyzes its bound ATP, resulting in the formation of a stable complex. GrpE releases ADP from DnaK; ATP binding to DnaK triggers the release of the substrate protein, thus completing the reaction cycle. Several rounds of ATP-dependent interactions between DnaJ, DnaK and GrpE are required for fully efficient folding. This chain is Protein GrpE, found in Shewanella sp. (strain W3-18-1).